Reading from the N-terminus, the 450-residue chain is Immunoglobulin G-binding protein A (450 aa).

Residues 1-36 (MKKKNIYSIRKLGVGIASVTLGTLLISGGVTPAANA) form the signal peptide. Residues 7-18 (YSIRKLGVGIAS) carry the YSIRK-G/S signaling motif motif. The stretch at 37–92 (AQHDEAQQNAFYQVLNMPNLNADQRNGFIQSLKDDPSQSANVLGEAQKLNDSQAPK) is one Immunoglobulin-binding region E repeat. The stretch at 93 to 153 (ADAQQNNFNK…KKLNESQAPK (61 aa)) is one Immunoglobulin-binding region D repeat. Residues 154 to 211 (ADNNFNKEQQNAFYEILNMPNLNEEQRNGFIQSLKDDPSQSANLLSEAKKLNESQAPK) form an Immunoglobulin-binding region A repeat. Residues 212-269 (ADNKFNKEQQNAFYEILHLPNLNEEQRNGFIQSLKDDPSVSKEILAEAKKLNDAQAPK) form an Immunoglobulin-binding region B/C repeat. The segment covering 260–354 (KKLNDAQAPK…GNKPGKEDGN (95 aa)) has biased composition (basic and acidic residues). 2 disordered regions span residues 260 to 365 (KKLN…GDTV) and 401 to 421 (KKQP…ETGE). 11 consecutive repeat copies span residues 268 to 275 (PKEEDNKK), 276 to 283 (PGKEDGNK), 284 to 291 (PGKEDGNK), 292 to 299 (PGKEDNKK), 300 to 307 (PGKEDGNK), 308 to 315 (PGKEDNNK), 316 to 323 (PGKEDGNK), 324 to 331 (PGKEDNNK), 332 to 339 (PGKEDGNK), 340 to 347 (PGKEDGNK), and 348 to 355 (PGKEDGNG). The tract at residues 268–355 (PKEEDNKKPG…NKPGKEDGNG (88 aa)) is 12 X 8 AA approximate tandem repeats. Positions 355–399 (GVHVVKPGDTVNDIAKANGTTADKIAADNKLADKNMIKPGQELVV) constitute a LysM domain. Positions 416 to 420 (LPETG) match the LPXTG sorting signal motif. T419 is modified (pentaglycyl murein peptidoglycan amidated threonine). Positions 420 to 450 (GEENPFIGTTVFGGLSLALGAALLAGRRREL) are cleaved as a propeptide — removed by sortase.

Belongs to the immunoglobulin-binding protein SpA family. Interacts with host TNFRSF1A; this interaction leads to the stimulation of both surface expression and shedding of TNFRSF1A.

It is found in the secreted. The protein resides in the cell wall. In terms of biological role, plays a role in the inhibition of the host innate and adaptive immune responses. Possesses five immunoglobulin-binding domains that capture both the fragment crystallizable region (Fc region) and the Fab region (part of Ig that identifies antigen) of immunoglobulins. In turn, Staphylococcus aureus is protected from phagocytic killing via inhibition of Ig Fc region. In addition, the host elicited B-cell response is prevented due to a decrease of antibody-secreting cell proliferation that enter the bone marrow, thereby decreasing long-term antibody production. Inhibits osteogenesis by preventing osteoblast proliferation and expression of alkaline phosphatase, type I collagen, osteopontin and osteocalcin. Acts directly as a pro-inflammatory factor in the lung through its ability to bind and activate tumor necrosis factor alpha receptor 1/TNFRSF1A. In Staphylococcus aureus (strain Mu50 / ATCC 700699), this protein is Immunoglobulin G-binding protein A (spa).